The primary structure comprises 122 residues: Large ribosomal subunit protein uL14 (122 aa).

The protein belongs to the universal ribosomal protein uL14 family. As to quaternary structure, part of the 50S ribosomal subunit. Forms a cluster with proteins L3 and L19. In the 70S ribosome, L14 and L19 interact and together make contacts with the 16S rRNA in bridges B5 and B8.

In terms of biological role, binds to 23S rRNA. Forms part of two intersubunit bridges in the 70S ribosome. In Nitratiruptor sp. (strain SB155-2), this protein is Large ribosomal subunit protein uL14.